Here is a 298-residue protein sequence, read N- to C-terminus: UDP-N-acetylenolpyruvoylglucosamine reductase (298 aa).

The region spanning 27-206 (VGGPAQRLYR…QQQIRRLLRQ (180 aa)) is the FAD-binding PCMH-type domain. The active site involves arginine 171. The active-site Proton donor is the serine 220. Residue glutamate 290 is part of the active site.

This sequence belongs to the MurB family. FAD is required as a cofactor.

Its subcellular location is the cytoplasm. The catalysed reaction is UDP-N-acetyl-alpha-D-muramate + NADP(+) = UDP-N-acetyl-3-O-(1-carboxyvinyl)-alpha-D-glucosamine + NADPH + H(+). It functions in the pathway cell wall biogenesis; peptidoglycan biosynthesis. Cell wall formation. In Nitrosococcus oceani (strain ATCC 19707 / BCRC 17464 / JCM 30415 / NCIMB 11848 / C-107), this protein is UDP-N-acetylenolpyruvoylglucosamine reductase.